A 209-amino-acid chain; its full sequence is Translation initiation factor IF-3 (209 aa).

It belongs to the IF-3 family. As to quaternary structure, monomer.

The protein resides in the cytoplasm. Functionally, IF-3 binds to the 30S ribosomal subunit and shifts the equilibrium between 70S ribosomes and their 50S and 30S subunits in favor of the free subunits, thus enhancing the availability of 30S subunits on which protein synthesis initiation begins. The polypeptide is Translation initiation factor IF-3 (Chlorobium phaeovibrioides (strain DSM 265 / 1930) (Prosthecochloris vibrioformis (strain DSM 265))).